The following is a 226-amino-acid chain: Transcriptional regulatory protein DpiA (226 aa).

One can recognise a Response regulatory domain in the interval 6 to 122 (TLLIVEDETP…RLGQTLTRFR (117 aa)). Asp57 carries the 4-aspartylphosphate modification. Positions 180–199 (AETVAQALTISRTTARRYLE) form a DNA-binding region, H-T-H motif.

Post-translationally, phosphorylated and activated by DpiB.

The protein resides in the cytoplasm. Its function is as follows. Member of the two-component regulatory system DpiA/DpiB, which is essential for expression of citrate-specific fermentation genes and genes involved in plasmid inheritance. Could be involved in response to both the presence of citrate and external redox conditions. In Escherichia coli O157:H7, this protein is Transcriptional regulatory protein DpiA (dpiA).